A 169-amino-acid polypeptide reads, in one-letter code: Cell division inhibitor SulA (169 aa).

Positions 106–112 (ALRTGNY) are ftsZ binding. A lon protease binding region spans residues 162–169 (KIHSNLYH).

Belongs to the SulA family. In terms of assembly, interacts with FtsZ. In terms of processing, is rapidly cleaved and degraded by the Lon protease once DNA damage is repaired.

Component of the SOS system and an inhibitor of cell division. Accumulation of SulA causes rapid cessation of cell division and the appearance of long, non-septate filaments. In the presence of GTP, binds a polymerization-competent form of FtsZ in a 1:1 ratio, thus inhibiting FtsZ polymerization and therefore preventing it from participating in the assembly of the Z ring. This mechanism prevents the premature segregation of damaged DNA to daughter cells during cell division. The sequence is that of Cell division inhibitor SulA from Salmonella dublin (strain CT_02021853).